The following is a 455-amino-acid chain: Ribulose bisphosphate carboxylase large chain (455 aa).

At lysine 5 the chain carries N6,N6,N6-trimethyllysine. The substrate site is built by asparagine 114 and threonine 164. The Proton acceptor role is filled by lysine 166. Position 168 (lysine 168) interacts with substrate. 3 residues coordinate Mg(2+): lysine 192, aspartate 194, and glutamate 195. Residue lysine 192 is modified to N6-carboxylysine. Residue histidine 285 is the Proton acceptor of the active site. 3 residues coordinate substrate: arginine 286, histidine 318, and serine 370.

The protein belongs to the RuBisCO large chain family. Type I subfamily. As to quaternary structure, heterohexadecamer of 8 large chains and 8 small chains; disulfide-linked. The disulfide link is formed within the large subunit homodimers. It depends on Mg(2+) as a cofactor. Post-translationally, the disulfide bond which can form in the large chain dimeric partners within the hexadecamer appears to be associated with oxidative stress and protein turnover.

It localises to the plastid. Its subcellular location is the chloroplast. The catalysed reaction is 2 (2R)-3-phosphoglycerate + 2 H(+) = D-ribulose 1,5-bisphosphate + CO2 + H2O. The enzyme catalyses D-ribulose 1,5-bisphosphate + O2 = 2-phosphoglycolate + (2R)-3-phosphoglycerate + 2 H(+). RuBisCO catalyzes two reactions: the carboxylation of D-ribulose 1,5-bisphosphate, the primary event in carbon dioxide fixation, as well as the oxidative fragmentation of the pentose substrate in the photorespiration process. Both reactions occur simultaneously and in competition at the same active site. The protein is Ribulose bisphosphate carboxylase large chain of Lupinus latifolius (Broad-leaved lupine).